The chain runs to 257 residues: YPLALASIVNDGWSLSSLHCQLSGFLMGLSVIGSVFNITGIAINRYCCICHSLRYNKLYSSTNSLCYVFLIWMLTLVAIVPNLCVGTLQYDPRIYSCTFTQSVSSAYTIAVVVFHFIVPMLVVIFCYLRIWALVLQVRWRVKPDNKPKLKPQDFRNFVTMFVVFVLFAICWAPLNFIGLVVASEPASMAPRIPEWLFVASYYMGYFNSCLNAIIYGLLNQNFRQEYRKIIVSLCTTKMFFVDSSNHVAHRIKRKPSP.

Residues 5 to 22 (LASIVNDGWSLSSLHCQL) lie on the Extracellular side of the membrane. A disulfide bridge connects residues C20 and C97. A helical transmembrane segment spans residues 23–43 (SGFLMGLSVIGSVFNITGIAI). Residues 44–64 (NRYCCICHSLRYNKLYSSTNS) are Cytoplasmic-facing. A helical membrane pass occupies residues 65–85 (LCYVFLIWMLTLVAIVPNLCV). Residues 86-107 (GTLQYDPRIYSCTFTQSVSSAY) are Extracellular-facing. The chain crosses the membrane as a helical span at residues 108-128 (TIAVVVFHFIVPMLVVIFCYL). Over 129–160 (RIWALVLQVRWRVKPDNKPKLKPQDFRNFVTM) the chain is Cytoplasmic. The helical transmembrane segment at 161 to 181 (FVVFVLFAICWAPLNFIGLVV) threads the bilayer. At 182-194 (ASEPASMAPRIPE) the chain is on the extracellular side. The helical transmembrane segment at 195-215 (WLFVASYYMGYFNSCLNAIIY) threads the bilayer. Topologically, residues 216 to 257 (GLLNQNFRQEYRKIIVSLCTTKMFFVDSSNHVAHRIKRKPSP) are cytoplasmic.

This sequence belongs to the G-protein coupled receptor 1 family.

It localises to the cell membrane. Functionally, high affinity receptor for melatonin. Likely to mediate the reproductive and circadian actions of melatonin. The activity of this receptor is mediated by pertussis toxin sensitive G proteins that inhibit adenylate cyclase activity. Possibly involved in sleep induction, by melatonin activation of the potassium channel KCNMA1/BK and the dissociation of G-beta and G-gamma subunits, thereby decreasing synaptic transmission. The polypeptide is Melatonin receptor type 1A (MTNR1A) (Bos taurus (Bovine)).